We begin with the raw amino-acid sequence, 207 residues long: uncharacterized protein (207 aa).

5 helical membrane passes run 28–48 (IAVLLPLIEAFLPFLPLIVFV), 59–79 (EGFILSWAGSTAGSILVFLIV), 112–132 (MFLLLCFPFTPSAAVNVVAGL), 140–160 (FILAAASGKLVMIFMISFIGY), and 165–185 (LITQPIRTVIAVLVITVLWYV).

Its subcellular location is the cell membrane. This is an uncharacterized protein from Bacillus subtilis (strain 168).